Reading from the N-terminus, the 508-residue chain is Probable polyol transporter 3 (508 aa).

The next 12 helical transmembrane spans lie at 21 to 41 (FAFG…YDTG), 60 to 80 (QIEV…LTAG), 90 to 110 (YTIA…GYGP), 120 to 140 (CIAG…SAEI), 147 to 167 (GFLT…GYVS), 178 to 198 (LGWR…AFGI), 280 to 300 (ILIA…EAVV), 318 to 338 (LLLA…IATF), 348 to 368 (LLLT…VSLT), 384 to 404 (IVST…ITWV), 418 to 438 (GASI…MSFL), and 448 to 468 (GVFF…FFML).

It belongs to the major facilitator superfamily. Sugar transporter (TC 2.A.1.1) family.

It is found in the membrane. Functionally, plasma membrane sugar-proton symporter. This is Probable polyol transporter 3 (PLT3) from Arabidopsis thaliana (Mouse-ear cress).